Consider the following 1265-residue polypeptide: Protein transport protein SEC31 (1265 aa).

WD repeat units lie at residues 6–46 (EIAR…ELWD), 61–105 (TVDN…KTKD), 116–156 (KHTG…EPFA), 162–202 (TPMD…EVLH), 209–252 (GGRA…APEK), 256–296 (GHKK…KLGE), and 299–339 (TTAN…PSVS). A WD 8; interaction with SEC13 repeat occupies 380–403 (SFGFGSKLVIINTDSSGKSTVKVD). Residues 457-480 (KESLFEDANNDEKEATSPETKKEN) show a composition bias toward basic and acidic residues. Disordered regions lie at residues 457–485 (KESL…EDDF), 765–784 (VKSS…GQTR), and 793–1163 (PAYA…IPEN). The span at 794 to 810 (AYAPPVQAPPVQAPQPP) shows a compositional bias: pro residues. Composition is skewed to low complexity over residues 811-824 (LVQQ…QQQP), 865-875 (TPSSLSGTTSG), 901-931 (AKTA…FGSP), 939-951 (SQPG…SSAG), and 969-987 (SISR…TVPA). Residues 1004–1023 (SDASQPPSSGFASPTLNSSP) are compositionally biased toward polar residues. 2 stretches are compositionally biased toward pro residues: residues 1062–1071 (YAPPKNPYAV) and 1083–1101 (APPP…PPQP).

The protein belongs to the WD repeat SEC31 family. As to quaternary structure, the COPII coat is composed of at least 5 proteins: the SEC23/24 complex, the SEC13/31 complex, and the protein SAR1. SEC13 and SEC31 make a 2:2 tetramer that forms the edge element of the COPII outer coat. The tetramer self-assembles in multiple copies to form the complete polyhedral cage. Interacts (via WD 8) with SEC13.

The protein localises to the cytoplasmic vesicle. It localises to the COPII-coated vesicle membrane. The protein resides in the endoplasmic reticulum membrane. In terms of biological role, component of the coat protein complex II (COPII) which promotes the formation of transport vesicles from the endoplasmic reticulum (ER). The coat has two main functions, the physical deformation of the endoplasmic reticulum membrane into vesicles and the selection of cargo molecules. This is Protein transport protein SEC31 (PGA63) from Candida albicans (strain SC5314 / ATCC MYA-2876) (Yeast).